The chain runs to 149 residues: Arginine repressor (149 aa).

This sequence belongs to the ArgR family.

It localises to the cytoplasm. The protein operates within amino-acid biosynthesis; L-arginine biosynthesis [regulation]. Regulates arginine biosynthesis genes. In Geobacillus thermodenitrificans (strain NG80-2), this protein is Arginine repressor.